Reading from the N-terminus, the 118-residue chain is uncharacterized protein (118 aa).

The helical transmembrane segment at 41 to 61 (IFLLIIITIIFALTMYTSVQV) threads the bilayer.

The protein resides in the host membrane. This is an uncharacterized protein from Ostreid herpesvirus 1 (isolate France) (OsHV-1).